The following is a 206-amino-acid chain: Endoribonuclease YbeY (206 aa).

The tract at residues 1 to 20 is disordered; sequence MSQANHNDTHNNIDDNINNH. Zn(2+)-binding residues include His168, His172, and His178.

Belongs to the endoribonuclease YbeY family. The cofactor is Zn(2+).

Its subcellular location is the cytoplasm. In terms of biological role, single strand-specific metallo-endoribonuclease involved in late-stage 70S ribosome quality control and in maturation of the 3' terminus of the 16S rRNA. This is Endoribonuclease YbeY from Psychrobacter arcticus (strain DSM 17307 / VKM B-2377 / 273-4).